The chain runs to 787 residues: Phenylalanine--tRNA ligase beta subunit (787 aa).

One can recognise a tRNA-binding domain in the interval 39–149; sequence APAFSGVVVA…EDAPVGTNIR (111 aa). Residues 400–475 enclose the B5 domain; that stretch reads PEAKQVGLRL…RVYGYENIPD (76 aa). 4 residues coordinate Mg(2+): Asp-453, Asp-459, Glu-462, and Glu-463. In terms of domain architecture, FDX-ACB spans 694-786; sequence SKFQPVRRDL…VATEAGARLR (93 aa).

The protein belongs to the phenylalanyl-tRNA synthetase beta subunit family. Type 1 subfamily. As to quaternary structure, tetramer of two alpha and two beta subunits. It depends on Mg(2+) as a cofactor.

The protein resides in the cytoplasm. The catalysed reaction is tRNA(Phe) + L-phenylalanine + ATP = L-phenylalanyl-tRNA(Phe) + AMP + diphosphate + H(+). The chain is Phenylalanine--tRNA ligase beta subunit from Neisseria gonorrhoeae (strain ATCC 700825 / FA 1090).